The following is a 316-amino-acid chain: Ribosomal RNA small subunit methyltransferase H (316 aa).

S-adenosyl-L-methionine contacts are provided by residues 35–37, D55, F84, D105, and Q112; that span reads AGH.

It belongs to the methyltransferase superfamily. RsmH family.

The protein resides in the cytoplasm. The catalysed reaction is cytidine(1402) in 16S rRNA + S-adenosyl-L-methionine = N(4)-methylcytidine(1402) in 16S rRNA + S-adenosyl-L-homocysteine + H(+). Its function is as follows. Specifically methylates the N4 position of cytidine in position 1402 (C1402) of 16S rRNA. This Streptococcus thermophilus (strain CNRZ 1066) protein is Ribosomal RNA small subunit methyltransferase H.